Reading from the N-terminus, the 414-residue chain is Serine hydroxymethyltransferase (414 aa).

(6S)-5,6,7,8-tetrahydrofolate is bound by residues Leu-121 and 125–127 (GHL). Lys-229 is subject to N6-(pyridoxal phosphate)lysine.

It belongs to the SHMT family. Homodimer. Pyridoxal 5'-phosphate is required as a cofactor.

The protein resides in the cytoplasm. The enzyme catalyses (6R)-5,10-methylene-5,6,7,8-tetrahydrofolate + glycine + H2O = (6S)-5,6,7,8-tetrahydrofolate + L-serine. It functions in the pathway one-carbon metabolism; tetrahydrofolate interconversion. Its pathway is amino-acid biosynthesis; glycine biosynthesis; glycine from L-serine: step 1/1. Functionally, catalyzes the reversible interconversion of serine and glycine with tetrahydrofolate (THF) serving as the one-carbon carrier. This reaction serves as the major source of one-carbon groups required for the biosynthesis of purines, thymidylate, methionine, and other important biomolecules. Also exhibits THF-independent aldolase activity toward beta-hydroxyamino acids, producing glycine and aldehydes, via a retro-aldol mechanism. This Albidiferax ferrireducens (strain ATCC BAA-621 / DSM 15236 / T118) (Rhodoferax ferrireducens) protein is Serine hydroxymethyltransferase.